Reading from the N-terminus, the 705-residue chain is Frizzled-4 (705 aa).

A signal peptide spans 1 to 22 (MKPTCILCLLVVILLHPRISKS). Residues 21-37 (KSSTSGNPSASSSSSSP) show a composition bias toward low complexity. The segment at 21–40 (KSSTSGNPSASSSSSSPPEI) is disordered. Topologically, residues 23–233 (STSGNPSASS…FTPAEKHLAE (211 aa)) are extracellular. The 123-residue stretch at 41-163 (PAFRQCETIR…NNHETMCMEG (123 aa)) folds into the FZ domain. 5 disulfides stabilise this stretch: cysteine 46/cysteine 107, cysteine 54/cysteine 100, cysteine 91/cysteine 130, cysteine 119/cysteine 160, and cysteine 123/cysteine 147. Residue asparagine 60 is glycosylated (N-linked (GlcNAc...) asparagine). Residues 234–254 (IWVSTWAYAALGLALVATVCL) form a helical membrane-spanning segment. Residues 255–270 (LASDGSRLASAKWSRL) lie on the Cytoplasmic side of the membrane. A helical membrane pass occupies residues 271 to 291 (LSPLIWCHNMVTLGWAVRFMV). Topologically, residues 292–322 (GRTGTACGTDPQAPNESLLTVDGLSNASCAS) are extracellular. N-linked (GlcNAc...) asparagine glycans are attached at residues asparagine 306 and asparagine 317. The helical transmembrane segment at 323 to 343 (VFLMRYYFGMAACAWWAVLCL) threads the bilayer. Over 344–386 (GWHRDIRRHSPDSKGHVVIPSNFGGSPAKRNSAKTAQQDLTQN) the chain is Cytoplasmic. Residues 387–407 (NFVCFVAWGLPAFQTSAVIVA) form a helical membrane-spanning segment. The Extracellular segment spans residues 408-430 (RFVDADELLGACFVGNQSDKALQ). Residue asparagine 423 is glycosylated (N-linked (GlcNAc...) asparagine). Residues 431 to 451 (ILVATPVFCYWIFGSMNLISG) form a helical membrane-spanning segment. At 452-483 (YLVHCRTKEILRNSNALSVQQQLQQLSAHSSS) the chain is on the cytoplasmic side. Residues 484–504 (GIGIFLFIYGLACAMLLLAVI) form a helical membrane-spanning segment. At 505 to 529 (YEFANIDVWLGSGDTNTPLWPFLLR) the chain is on the extracellular side. The chain crosses the membrane as a helical span at residues 530–550 (AFMELMLGICCFAWVLGPSIS). At 551–705 (TLYKRQVSNG…LQQYGNETLL (155 aa)) the chain is on the cytoplasmic side. A disordered region spans residues 635-681 (RSVHHQQRHSPHHHHHQQQQHHQFHPHHNHQHHSTSSHRLYYPPGSY). Residues 636–670 (SVHHQQRHSPHHHHHQQQQHHQFHPHHNHQHHSTS) are compositionally biased toward basic residues. The PDZ-binding motif lies at 703 to 705 (TLL).

The protein belongs to the G-protein coupled receptor Fz/Smo family.

Its subcellular location is the membrane. Its function is as follows. Receptor for Wnt proteins. Most of frizzled receptors are coupled to the beta-catenin canonical signaling pathway, which leads to the activation of disheveled proteins, inhibition of GSK-3 kinase, nuclear accumulation of beta-catenin and activation of Wnt target genes. A second signaling pathway involving PKC and calcium fluxes has been seen for some family members, but it is not yet clear if it represents a distinct pathway or if it can be integrated in the canonical pathway, as PKC seems to be required for Wnt-mediated inactivation of GSK-3 kinase. Both pathways seem to involve interactions with G-proteins. May be involved in transduction and intercellular transmission of polarity information during tissue morphogenesis and/or in differentiated tissues. Required to coordinate the cytoskeletons of epidermal cells to produce a parallel array of cuticular hairs and bristles. The protein is Frizzled-4 (fz4) of Drosophila melanogaster (Fruit fly).